Consider the following 148-residue polypeptide: Large ribosomal subunit protein bL9 (148 aa).

It belongs to the bacterial ribosomal protein bL9 family.

Binds to the 23S rRNA. The sequence is that of Large ribosomal subunit protein bL9 from Bacillus cytotoxicus (strain DSM 22905 / CIP 110041 / 391-98 / NVH 391-98).